The primary structure comprises 612 residues: Transcription factor unc-37 (612 aa).

A disordered region spans residues 143-228 (FASPHVNGGD…SNSRARQQQQ (86 aa)). Residues 150–159 (GGDGAGGSSG) show a composition bias toward gly residues. Residues 153–196 (GAGGSSGGASEAKKAKLEDPDDGELEIDVTNDDHPSTASNGGAA) are CCN domain. A compositionally biased stretch (acidic residues) spans 171–182 (DPDDGELEIDVT). The segment covering 202–221 (DSTNSVASSGASTPSIASNS) has biased composition (polar residues). WD repeat units lie at residues 308–339 (GIPT…RVYT), 372–402 (LKEN…ALWD), 414–444 (TDSQ…LIYD), 456–486 (GHQD…RCWD), 538–568 (QHES…NAWR), and 579–609 (KENS…TLYA).

The protein belongs to the WD repeat Groucho/TLE family. In terms of assembly, interacts with unc-4. Interacts with ref-1. May interact with mls-1.

Its subcellular location is the nucleus. Functionally, transcriptional corepressor that functions with the neural specificity gene unc-4 to govern motor neuron identity. In concert with unc-4, represses the expression of VB-specific genes such as ceh-12, thereby preventing the adoption of VB motor neuron fate. May function with transcription factor mls-1 to promote uterine muscle specification and formation. The protein is Transcription factor unc-37 (unc-37) of Caenorhabditis elegans.